The primary structure comprises 796 residues: ATP-dependent DNA helicase PIF6 (796 aa).

The tract at residues 197-230 is disordered; sequence RPTGLPSAHSGGKLPKHMGGDELNPQLEGSTTPG. 255 to 262 contributes to the ATP binding site; it reads GSAGTGKT. The DNA-binding element occupies 636-655; sequence QAYVALSRVRSREDLMLTAF. Disordered stretches follow at residues 692 to 719 and 762 to 796; these read KGKTRAKHPRSQGEKNSVDEGGNAPEEH and TSSAIPNFTQESNNGDANSQLQHPFSQNNLMVDDD.

It belongs to the helicase family. PIF1 subfamily. Monomer. Mg(2+) serves as cofactor.

The protein localises to the nucleus. The enzyme catalyses Couples ATP hydrolysis with the unwinding of duplex DNA at the replication fork by translocating in the 5'-3' direction. This creates two antiparallel DNA single strands (ssDNA). The leading ssDNA polymer is the template for DNA polymerase III holoenzyme which synthesizes a continuous strand.. It catalyses the reaction ATP + H2O = ADP + phosphate + H(+). Functionally, DNA-dependent ATPase and 5'-3' DNA helicase required for the maintenance of genome stability. In Trypanosoma brucei brucei (strain 927/4 GUTat10.1), this protein is ATP-dependent DNA helicase PIF6.